Reading from the N-terminus, the 65-residue chain is MPKLKTRRSAAKRFKRSGSGKFMRRKAYKNHLLEHKGPDRKSRLSKKCVVSEQDAENVRAMMPYS.

This sequence belongs to the bacterial ribosomal protein bL35 family.

The protein is Large ribosomal subunit protein bL35 of Acaryochloris marina (strain MBIC 11017).